The sequence spans 212 residues: Imidazole glycerol phosphate synthase subunit HisH (212 aa).

One can recognise a Glutamine amidotransferase type-1 domain in the interval 2 to 212 (LTAIIDYESG…MIGNFLTWTP (211 aa)). The active-site Nucleophile is the C87. Residues H192 and E194 contribute to the active site.

Heterodimer of HisH and HisF.

It is found in the cytoplasm. It catalyses the reaction 5-[(5-phospho-1-deoxy-D-ribulos-1-ylimino)methylamino]-1-(5-phospho-beta-D-ribosyl)imidazole-4-carboxamide + L-glutamine = D-erythro-1-(imidazol-4-yl)glycerol 3-phosphate + 5-amino-1-(5-phospho-beta-D-ribosyl)imidazole-4-carboxamide + L-glutamate + H(+). The catalysed reaction is L-glutamine + H2O = L-glutamate + NH4(+). The protein operates within amino-acid biosynthesis; L-histidine biosynthesis; L-histidine from 5-phospho-alpha-D-ribose 1-diphosphate: step 5/9. IGPS catalyzes the conversion of PRFAR and glutamine to IGP, AICAR and glutamate. The HisH subunit catalyzes the hydrolysis of glutamine to glutamate and ammonia as part of the synthesis of IGP and AICAR. The resulting ammonia molecule is channeled to the active site of HisF. This Ruegeria pomeroyi (strain ATCC 700808 / DSM 15171 / DSS-3) (Silicibacter pomeroyi) protein is Imidazole glycerol phosphate synthase subunit HisH.